The primary structure comprises 25 residues: Small ribosomal subunit protein uS19 (25 aa).

The tract at residues 1–25 (GHKLGEFAPTRTFRGHKKEDKKVKR) is disordered.

It belongs to the universal ribosomal protein uS19 family.

Functionally, protein S19 forms a complex with S13 that binds strongly to the 16S ribosomal RNA. The protein is Small ribosomal subunit protein uS19 (rpsS) of Acholeplasma laidlawii.